Reading from the N-terminus, the 454-residue chain is Gustatory and odorant receptor 21a (454 aa).

The Cytoplasmic portion of the chain corresponds to 1 to 114; that stretch reads MTFLDRTMSF…LPRTGYSWGS (114 aa). Residues 115–135 form a helical membrane-spanning segment; sequence KQVMWAIFIYSCQTTIVVLVL. Residues 136–153 are Extracellular-facing; that stretch reads RERVKKFVTSPDKRFDEA. Residues 154–174 form a helical membrane-spanning segment; that stretch reads IYNVIFISLLFTNFLLPVASW. The Cytoplasmic segment spans residues 175–206; the sequence is RHGPQVAIFKNMWTNYQYKFFKTTGSPIVFPN. A helical membrane pass occupies residues 207 to 227; it reads LYPLTWSLCVFSWLLSIAINL. The Extracellular portion of the chain corresponds to 228–237; sequence SQYFLQPDFR. The helical transmembrane segment at 238 to 258 threads the bilayer; sequence LWYTFAYYPIIAMLNCFCSLW. Over 259–312 the chain is Cytoplasmic; sequence YINCNAFGTASRALSDALQTTIRGEKPAQKLTEYRHLWVDLSHMMQQLGRAYSN. Residues 313–333 form a helical membrane-spanning segment; it reads MYGMYCLVIFFTTIIATYGSI. Residues 334–345 lie on the Extracellular side of the membrane; the sequence is SEIIDHGATYKE. A helical membrane pass occupies residues 346–366; it reads VGLFVIVFYCMGLLYIICNEA. The Cytoplasmic portion of the chain corresponds to 367–422; the sequence is HYASRKVGLDFQTKLLNINLTAVDAATQKEVEMLLVAINKNPPIMNLDGYANINRE. The helical transmembrane segment at 423 to 443 threads the bilayer; that stretch reads LITTNISFMATYLVVLLQFKI. At 444 to 454 the chain is on the extracellular side; sequence TEQRRIGQQQA.

This sequence belongs to the insect chemoreceptor superfamily. Gustatory receptor (GR) family. Gr21a subfamily. In terms of assembly, gr21a and Gr63a probably form a heterodimer that responds to CO(2). As to expression, expressed in the adult labellar chemosensory neurons. Carbon dioxide-responsive neurons coexpress Gr21a and Gr63a in a pair of chemosensory receptors at both larval and adult life stages. A single bilateral neuron, expressing the Gr21a receptor, is responsible for CO(2) detection in larvae.

Its subcellular location is the cell membrane. Gustatory and odorant receptor which mediates acceptance or avoidance behavior, depending on its substrates. Gr21a and Gr63a together are sufficient for carbon dioxide detection and avoidance behavior. It is possible that the CO(2) receptors Gr63a and Gr21a activate the TRPC channels through Galpha49B and Plc21C. This innate olfactory avoidance behavior can be inhibited by inhibitory interactions of the odors such as 1-hexanol and 2,3-butanedione with Gr21a and Gr63a. This Drosophila melanogaster (Fruit fly) protein is Gustatory and odorant receptor 21a (Gr21a).